Consider the following 88-residue polypeptide: LYR motif-containing protein 2 (88 aa).

The transit peptide at 1 to 19 (MAASRLPPATLTLKQFVRR) directs the protein to the mitochondrion.

Belongs to the complex I LYR family.

The protein resides in the mitochondrion. Involved in efficient integration of the N-module into mitochondrial respiratory chain complex I. The polypeptide is LYR motif-containing protein 2 (LYRM2) (Pongo abelii (Sumatran orangutan)).